A 582-amino-acid polypeptide reads, in one-letter code: Myoneurin (582 aa).

Residues 24–89 form the BTB domain; it reads CDCTIVIGEF…IYTGTLNLDS (66 aa). A disordered region spans residues 169 to 197; that stretch reads QGALAKKSSQTKKKKKAFNSPKTGQNKTV. 2 consecutive short sequence motifs (nuclear localization signal) follow at residues 174 to 190 and 257 to 262; these read KKSS…NSPK and KRKRGK. The segment covering 188 to 197 has biased composition (polar residues); the sequence is SPKTGQNKTV. Residue serine 289 is modified to Phosphoserine. The segment at 302 to 324 adopts a C2H2-type 1; degenerate zinc-finger fold; the sequence is PMCNTRGKVFSEASSLRRHMRIH. C2H2-type zinc fingers lie at residues 330 to 352, 358 to 381, 387 to 409, 415 to 437, 443 to 465, and 471 to 494; these read YVCH…VRTH, YKCE…RMHH, YKCD…ARKH, YVCD…VRRH, YVCD…SRKH, and FICE…TKVH. The segment at 489–538 is disordered; the sequence is HKTKVHSGADKTPDSSAEDHTLSEQDSIQKSPLSETMDVKPSDTTLPLAL. Positions 495–511 are enriched in basic and acidic residues; it reads SGADKTPDSSAEDHTLS. Positions 512–522 are enriched in polar residues; that stretch reads EQDSIQKSPLS.

The protein belongs to the krueppel C2H2-type zinc-finger protein family.

The protein resides in the nucleus. The sequence is that of Myoneurin (MYNN) from Pongo abelii (Sumatran orangutan).